Here is a 139-residue protein sequence, read N- to C-terminus: uncharacterized protein (139 aa).

Positions 19-73 (IRLRRTMLGMSQEKLGESLGITFQQIQKYEKGTNRVGASRLQNISQILNVPVSFF) constitute an HTH cro/C1-type domain. A DNA-binding region (H-T-H motif) is located at residues 30-49 (QEKLGESLGITFQQIQKYEK).

This is an uncharacterized protein from Rhizobium meliloti (strain 1021) (Ensifer meliloti).